Reading from the N-terminus, the 1340-residue chain is Pleckstrin homology domain-containing family G member 2 (1340 aa).

Residues 34-44 (TPTAQAATTMA) show a composition bias toward polar residues. Residues 34–76 (TPTAQAATTMASPRGSGSSTSLSTVGSEGDPSPACSASRPEPL) are disordered. Residues 45–62 (SPRGSGSSTSLSTVGSEG) show a composition bias toward low complexity. In terms of domain architecture, DH spans 98-279 (RLERVAREIV…TAVAWYINDM (182 aa)). Residues 309–407 (ELVLEGTFRG…WIHCLQRLFF (99 aa)) enclose the PH domain. 7 disordered regions span residues 431-623 (PKSK…IPCI), 684-743 (LPGP…SVQG), 820-855 (MQRA…EAEP), 907-979 (NVSD…PSAG), 991-1028 (TTSL…EQRD), 1047-1069 (PVCT…STDF), and 1125-1146 (PLSS…SLTD). Thr-441 is subject to Phosphothreonine. Phosphoserine occurs at positions 446 and 465. The segment covering 560 to 572 (DIPKFPRDSRVPV) has biased composition (basic and acidic residues). Positions 588–600 (SEEEEEEDLETDE) are enriched in acidic residues. 5 stretches are compositionally biased toward polar residues: residues 703–714 (SGSNPGRLSESP), 820–831 (MQRAETRASTNA), 907–921 (NVSD…SSNS), 930–945 (GQSN…TSLL), and 956–972 (PTAS…SQVP). Residues 1049–1059 (CTSSPDQQIPA) show a composition bias toward polar residues. A Phosphothreonine modification is found at Thr-1215. Phosphoserine occurs at positions 1219 and 1269. The tract at residues 1250–1340 (RRQGPGGEGT…VGPSQGPGGS (91 aa)) is disordered. The segment covering 1276-1288 (PSPPPQPQPPAPP) has biased composition (pro residues). Low complexity predominate over residues 1319 to 1333 (HPALLAAPHPGAVGP).

As to expression, expressed in thymus, skeletal muscle, lung, testis, uterus, pancreas and heart and also expressed during embryogenesis.

Its function is as follows. May be a transforming oncogene with exchange activity for CDC42. May be a guanine-nucleotide exchange factor (GEF) for RAC1 and CDC42. Activated by the binding to subunits beta and gamma of the heterotrimeric guanine nucleotide-binding protein (G protein). Involved in the regulation of actin polymerization. The polypeptide is Pleckstrin homology domain-containing family G member 2 (Plekhg2) (Mus musculus (Mouse)).